A 204-amino-acid chain; its full sequence is FMN-dependent NADH:quinone oxidoreductase (204 aa).

Residues Ser-10 and 15-17 (SLS) each bind FMN.

Belongs to the azoreductase type 1 family. In terms of assembly, homodimer. It depends on FMN as a cofactor.

The catalysed reaction is 2 a quinone + NADH + H(+) = 2 a 1,4-benzosemiquinone + NAD(+). It carries out the reaction N,N-dimethyl-1,4-phenylenediamine + anthranilate + 2 NAD(+) = 2-(4-dimethylaminophenyl)diazenylbenzoate + 2 NADH + 2 H(+). Quinone reductase that provides resistance to thiol-specific stress caused by electrophilic quinones. Functionally, also exhibits azoreductase activity. Catalyzes the reductive cleavage of the azo bond in aromatic azo compounds to the corresponding amines. This chain is FMN-dependent NADH:quinone oxidoreductase, found in Rhizobium johnstonii (strain DSM 114642 / LMG 32736 / 3841) (Rhizobium leguminosarum bv. viciae).